The primary structure comprises 299 residues: MTTKHELVINTNEPSAPNADSFYPSYSNETSFSPQYQRDFSGFSGGGMIGEKMATRYEGRTLPRDSLMMIESQSPLNHRKTDFNDKTKTLPVYKNGGYPNLETFKVSRRETDEEEEHFKDYKINKISEYIKYLDTEIKDRERLKKNYGKLDKTLFGVECSCMITELGVTGTSFFIPPMVVISTPICLGLTVFSTVLRNGSKLITKKIDKHAHIELLAKSKRNSIDEKYTKAMEDGVISESEFQDIRKEIYNYDEMKKSILNQFKNNSQAIELTKEAQLTLINKGKEEMKEEFKIKLNKL.

Positions 1–20 (MTTKHELVINTNEPSAPNAD) are disordered. A helical transmembrane segment spans residues 172–192 (SFFIPPMVVISTPICLGLTVF).

The protein belongs to the IIV-6 259R family.

It localises to the membrane. This is an uncharacterized protein from Acheta domesticus (House cricket).